The sequence spans 381 residues: N-acetyl-alpha-D-glucosaminyl L-malate synthase (381 aa).

Positions 16, 94, and 122 each coordinate (S)-malate. UDP-binding residues include asparagine 206, glutamine 262, and glutamate 290.

The protein belongs to the glycosyltransferase group 1 family. Glycosyltransferase 4 subfamily. In terms of assembly, dimer of tetramers.

It carries out the reaction (S)-malate + UDP-N-acetyl-alpha-D-glucosamine = (S)-malyl N-acetyl-alpha-D-glucosaminide + UDP + H(+). Functionally, involved in bacillithiol (BSH) biosynthesis. Catalyzes the first step of the pathway, the formation of N-acetylglucosaminylmalate (GlcNAc-Mal) from UDP-N-acetylglucosamine (UDP-GlcNAc) and L-malate. The protein is N-acetyl-alpha-D-glucosaminyl L-malate synthase of Bacillus anthracis.